Consider the following 101-residue polypeptide: Phosphoribosyl-AMP cyclohydrolase (101 aa).

A Mg(2+)-binding site is contributed by D71. C72 lines the Zn(2+) pocket. Mg(2+) contacts are provided by D73 and D75. Positions 88 and 95 each coordinate Zn(2+).

The protein belongs to the PRA-CH family. Homodimer. Requires Mg(2+) as cofactor. It depends on Zn(2+) as a cofactor.

Its subcellular location is the cytoplasm. It catalyses the reaction 1-(5-phospho-beta-D-ribosyl)-5'-AMP + H2O = 1-(5-phospho-beta-D-ribosyl)-5-[(5-phospho-beta-D-ribosylamino)methylideneamino]imidazole-4-carboxamide. The protein operates within amino-acid biosynthesis; L-histidine biosynthesis; L-histidine from 5-phospho-alpha-D-ribose 1-diphosphate: step 3/9. Catalyzes the hydrolysis of the adenine ring of phosphoribosyl-AMP. This is Phosphoribosyl-AMP cyclohydrolase from Bacillus cereus (strain ATCC 10987 / NRS 248).